The sequence spans 354 residues: GTPase Obg (354 aa).

The Obg domain maps to 1-159 (MKFVDEVKIH…RDLVLELKLL (159 aa)). One can recognise an OBG-type G domain in the interval 160 to 333 (ADVGIVGYPN…LLDAVGRALF (174 aa)). Residues 166–173 (GYPNAGKS), 191–195 (FTTLT), 212–215 (DIPG), 283–286 (TKID), and 314–316 (SAV) each bind GTP. Positions 173 and 193 each coordinate Mg(2+).

Belongs to the TRAFAC class OBG-HflX-like GTPase superfamily. OBG GTPase family. As to quaternary structure, monomer. It depends on Mg(2+) as a cofactor.

It localises to the cytoplasm. In terms of biological role, an essential GTPase which binds GTP, GDP and possibly (p)ppGpp with moderate affinity, with high nucleotide exchange rates and a fairly low GTP hydrolysis rate. Plays a role in control of the cell cycle, stress response, ribosome biogenesis and in those bacteria that undergo differentiation, in morphogenesis control. This chain is GTPase Obg, found in Anaeromyxobacter dehalogenans (strain 2CP-C).